The sequence spans 185 residues: Elongation factor P (185 aa).

The protein belongs to the elongation factor P family.

Its subcellular location is the cytoplasm. It functions in the pathway protein biosynthesis; polypeptide chain elongation. In terms of biological role, involved in peptide bond synthesis. Stimulates efficient translation and peptide-bond synthesis on native or reconstituted 70S ribosomes in vitro. Probably functions indirectly by altering the affinity of the ribosome for aminoacyl-tRNA, thus increasing their reactivity as acceptors for peptidyl transferase. The chain is Elongation factor P from Aromatoleum aromaticum (strain DSM 19018 / LMG 30748 / EbN1) (Azoarcus sp. (strain EbN1)).